A 307-amino-acid polypeptide reads, in one-letter code: Putative oxidoreductase YceM (307 aa).

This sequence belongs to the Gfo/Idh/MocA family.

The sequence is that of Putative oxidoreductase YceM (yceM) from Escherichia coli (strain K12).